We begin with the raw amino-acid sequence, 382 residues long: Osmoprotectant import ATP-binding protein OsmV (382 aa).

In terms of domain architecture, ABC transporter spans 2 to 241 (IKLENLTKQF…PANEFVGSFV (240 aa)). 39-46 (GPSGCGKT) is a binding site for ATP. CBS domains are found at residues 258 to 320 (VTDQ…THPF) and 322 to 373 (ITGK…GRTR).

It belongs to the ABC transporter superfamily. In terms of assembly, the complex is composed of two ATP-binding proteins (OsmV), two transmembrane proteins (OsmW and OsmY) and a solute-binding protein (OsmX).

Its subcellular location is the cell inner membrane. Part of the OsmU ABC transporter complex, which is involved in the uptake of osmoprotectants such as choline-O-sulfate and glycine betaine. Probably responsible for energy coupling to the transport system. The sequence is that of Osmoprotectant import ATP-binding protein OsmV (osmV) from Salmonella typhimurium (strain LT2 / SGSC1412 / ATCC 700720).